The primary structure comprises 72 residues: BBSome-interacting protein 1 (72 aa).

The protein belongs to the BBIP10 family.

The protein localises to the cell projection. It localises to the cilium. Its subcellular location is the cytoplasm. Its function is as follows. Required for primary cilia assembly. The polypeptide is BBSome-interacting protein 1 (bbip1) (Danio rerio (Zebrafish)).